We begin with the raw amino-acid sequence, 45 residues long: Large ribosomal subunit protein bL34 (45 aa).

The tract at residues 1–45 is disordered; the sequence is MTKRTFGGTSRKRKRVSGFRVRMRSHTGRRVIKSRRKRGRDRIAV. The span at 10–45 shows a compositional bias: basic residues; sequence SRKRKRVSGFRVRMRSHTGRRVIKSRRKRGRDRIAV.

Belongs to the bacterial ribosomal protein bL34 family.

The protein is Large ribosomal subunit protein bL34 of Prochlorococcus marinus (strain MIT 9515).